Here is a 140-residue protein sequence, read N- to C-terminus: Large ribosomal subunit protein uL11 (140 aa).

Belongs to the universal ribosomal protein uL11 family. Part of the ribosomal stalk of the 50S ribosomal subunit. Interacts with L10 and the large rRNA to form the base of the stalk. L10 forms an elongated spine to which L12 dimers bind in a sequential fashion forming a multimeric L10(L12)X complex. In terms of processing, one or more lysine residues are methylated.

Functionally, forms part of the ribosomal stalk which helps the ribosome interact with GTP-bound translation factors. The protein is Large ribosomal subunit protein uL11 of Pelobacter propionicus (strain DSM 2379 / NBRC 103807 / OttBd1).